We begin with the raw amino-acid sequence, 1134 residues long: Sterol regulatory element-binding protein 1 (1134 aa).

Positions 1-60 are transcriptional activation (acidic); sequence MDELAFGEAALEQTLAEMCELDTAVLNDIEDMLQLINNQDSDFPGLFDAPYAGGETGDTG. Residues 1-477 lie on the Cytoplasmic side of the membrane; the sequence is MDELAFGEAA…HSRGMLDRSR (477 aa). Residues 27 to 35 carry the 9aaTAD motif; that stretch reads NDIEDMLQL. The disordered stretch occupies residues 46 to 73; it reads LFDAPYAGGETGDTGPSSPGANSPESFS. Residues 59-69 show a composition bias toward polar residues; sequence TGPSSPGANSP. 2 positions are modified to phosphoserine: Ser96 and Ser115. Disordered regions lie at residues 130-149 and 170-195; these read LQPA…SFPA and SGTL…VLPT. Positions 170-179 are enriched in polar residues; sequence SGTLPGNTQQ. The tract at residues 227-487 is interaction with LMNA; it reads QQVPVVLQPH…LALCVLAFLC (261 aa). One can recognise a bHLH domain in the interval 317–367; that stretch reads EKRTAHNAIEKRYRSSINDKIVELKDLVVGTEAKLNKSAVLRKAIDYIRFL. A phosphoserine; by SIK1 mark is found at Ser331 and Ser332. The interval 367–388 is leucine-zipper; sequence LQHSNQKLKQENLTLRSAHKSK. Ser389 is subject to Phosphoserine; by AMPK. At Ser395 the chain carries Phosphoserine; by SIK1. Residues 415–468 are disordered; that stretch reads VETLTPPPSDAGSPSQSSPLSFGSRASSSGGSDSEPDSPAFEDSQVKAQRLPSH. Over residues 424–453 the composition is skewed to low complexity; that stretch reads DAGSPSQSSPLSFGSRASSSGGSDSEPDSP. At Ser448 the chain carries Phosphoserine. Residues 478–498 traverse the membrane as a helical segment; that stretch reads LALCVLAFLCLTCNPLASLFG. The Lumenal portion of the chain corresponds to 499-536; it reads WGILTPSDATGTHRSSGRSMLEAESRDGSNWTQWLLPP. A helical transmembrane segment spans residues 537 to 557; the sequence is LVWLANGLLVLACLALLFVYG. The Cytoplasmic segment spans residues 558 to 1134; sequence EPVTRPHSGP…LGGGTTVTSS (577 aa). At Ser1047 the chain carries Phosphoserine.

It belongs to the SREBP family. As to quaternary structure, forms a tight complex with SCAP, the SCAP-SREBP complex, in the endoplasmic reticulum membrane and the Golgi apparatus. Interacts with PAQR3; the interaction anchors the SCAP-SREBP complex to the Golgi apparatus in low cholesterol conditions. In terms of assembly, efficient DNA binding of the soluble transcription factor fragment requires dimerization with another bHLH protein. Interacts with CEBPA, the interaction produces a transcriptional synergy. Interacts with LMNA. In terms of processing, processed in the Golgi apparatus, releasing the protein from the membrane. At low cholesterol the SCAP-SREBP complex is recruited into COPII vesicles for export from the endoplasmic reticulum. In the Golgi, complex SREBPs are cleaved sequentially by site-1 (MBTPS1, S1P) and site-2 (MBTPS2, S2P) proteases. The first cleavage by site-1 protease occurs within the luminal loop, the second cleavage by site-2 protease occurs within the first transmembrane domain, releasing the transcription factor from the Golgi membrane. Phosphorylated by AMPK, leading to suppress protein processing and nuclear translocation, and repress target gene expression. Phosphorylation at Ser-389 by SIK1 represses activity possibly by inhibiting DNA-binding. Post-translationally, SCAP-free SREBF1 is ubiquitinated by the BCR(ARMC5) complex, leading to its degradation. In terms of processing, ubiquitinated; the nuclear form has a rapid turnover and is rapidly ubiquitinated and degraded by the proteasome in the nucleus. In terms of tissue distribution, predominant isoform expressed in most tissues. Predominates in liver, adrenal gland, brain and adipose tissue. Also found in kidney, thymus, testis, muscle, jejunum, and ileum. As to expression, expressed only in select tissues, such as intestinal epithelial, heart, macrophage and bone marrow dendritic cells. Also found in kidney, thymus, testis, muscle, jejunum, and ileum.

The protein localises to the endoplasmic reticulum membrane. The protein resides in the golgi apparatus membrane. It is found in the cytoplasmic vesicle. It localises to the COPII-coated vesicle membrane. Its subcellular location is the nucleus. Its activity is regulated as follows. Activation by cleavage is down-regulated upon activation of SIRT3-dependent PRKAA1/AMPK-alpha signaling cascade which leads to inhibition of ATP-consuming lipogenesis to restore cellular energy balance. Functionally, precursor of the transcription factor form (Processed sterol regulatory element-binding protein 1), which is embedded in the endoplasmic reticulum membrane. Low sterol concentrations promote processing of this form, releasing the transcription factor form that translocates into the nucleus and activates transcription of genes involved in cholesterol biosynthesis and lipid homeostasis. In terms of biological role, key transcription factor that regulates expression of genes involved in cholesterol biosynthesis and lipid homeostasis. Binds to the sterol regulatory element 1 (SRE-1) (5'-ATCACCCCAC-3'). Has dual sequence specificity binding to both an E-box motif (5'-ATCACGTGA-3') and to SRE-1 (5'-ATCACCCCAC-3'). Regulates the promoters of genes involved in cholesterol biosynthesis and the LDL receptor (LDLR) pathway of sterol regulation. Isoform expressed only in select tissues, which has higher transcriptional activity compared to SREBP-1C. Able to stimulate both lipogenic and cholesterogenic gene expression. Has a role in the nutritional regulation of fatty acids and triglycerides in lipogenic organs such as the liver. Required for innate immune response in macrophages by regulating lipid metabolism. Its function is as follows. Predominant isoform expressed in most tissues, which has weaker transcriptional activity compared to isoform SREBP-1A. Primarily controls expression of lipogenic gene. Strongly activates global lipid synthesis in rapidly growing cells. This Mus musculus (Mouse) protein is Sterol regulatory element-binding protein 1.